The following is a 201-amino-acid chain: Guanylate kinase (201 aa).

Residues 7-186 (GVLLVLSSPS…SVEEISSILN (180 aa)) enclose the Guanylate kinase-like domain. Position 14–21 (14–21 (SPSGAGKT)) interacts with ATP.

The protein belongs to the guanylate kinase family.

The protein localises to the cytoplasm. It catalyses the reaction GMP + ATP = GDP + ADP. In terms of biological role, essential for recycling GMP and indirectly, cGMP. This is Guanylate kinase from Wolbachia pipientis wMel.